Consider the following 1631-residue polypeptide: Ras GTPase-activating-like protein IQGAP3 (1631 aa).

The Calponin-homology (CH) domain maps to 34–149 (LCRLEEAKRW…YCIHALSLFL (116 aa)). At Y162 the chain carries Phosphotyrosine. A Phosphoserine modification is found at S539. 4 consecutive IQ domains span residues 730–759 (NVGF…FLRT), 760–789 (WLPA…YFKA), 790–819 (NLDA…YFQK), and 820–849 (NVNS…APHP). The 250-residue stretch at 1004 to 1253 (YLLLQLFKTA…LKFRKFIHRA (250 aa)) folds into the Ras-GAP domain. S1424 is modified (phosphoserine).

This chain is Ras GTPase-activating-like protein IQGAP3 (IQGAP3), found in Homo sapiens (Human).